The sequence spans 2116 residues: Non-structural polyprotein p200 (2116 aa).

The tract at residues glutamate 36–isoleucine 49 is required for efficient proteolysis and P150-P90 interaction. One can recognise an Alphavirus-like MT domain in the interval valine 57–glutamine 247. A compositionally biased stretch (basic and acidic residues) spans glycine 457–aspartate 467. Disordered regions lie at residues glycine 457 to arginine 477 and alanine 712 to aspartate 805. Pro residues-rich tracts occupy residues serine 721–proline 730 and threonine 745–alanine 776. 3 consecutive short sequence motifs (pxxPxR; class II SH3-binding) follow at residues proline 727–arginine 732, proline 747–arginine 752, and proline 761–arginine 766. The region spanning serine 806–alanine 985 is the Macro domain. Residues valine 992–proline 1031 form a disordered region. The region spanning leucine 1000–glycine 1301 is the Peptidase C27 domain. Cysteine 1152 functions as the For cysteine protease activity in the catalytic mechanism. The segment at cysteine 1152–alanine 1183 is interaction with host CALM1. Residues cysteine 1175, cysteine 1178, cysteine 1227, and histidine 1273 each coordinate Zn(2+). Residues phenylalanine 1193 to serine 1228 are EF-hand-like. Histidine 1273 (for cysteine protease activity) is an active-site residue. Residues glutamate 1320–serine 1468 form the (+)RNA virus helicase ATP-binding domain. An a ribonucleoside 5'-triphosphate-binding site is contributed by methionine 1352–threonine 1359. Residues arginine 1469–aspartate 1609 form the (+)RNA virus helicase C-terminal domain. An involved in P150-P90 interaction region spans residues tyrosine 1700–leucine 1900. Positions threonine 1870–alanine 1981 constitute a RdRp catalytic domain. The short motif at leucine 1902 to glutamate 1906 is the Human RB1 binding element.

Interacts with RNA-directed RNA polymerase p90. Interacts with host CALM1; this interaction is necessary for the protease activity and viral infectivity. Interacts with host C1QBP. Interacts with the capsid protein. As to quaternary structure, interacts with human RB1/retinoblastoma protein. Interacts with protease/methyltransferase p150. Zn(2+) serves as cofactor. Post-translationally, specific enzymatic cleavage by its own cysteine protease yield mature proteins p150 and p90.

Its subcellular location is the host membrane. It localises to the host cytoplasm. The protein localises to the host perinuclear region. It catalyses the reaction RNA(n) + a ribonucleoside 5'-triphosphate = RNA(n+1) + diphosphate. The enzyme catalyses a ribonucleoside 5'-triphosphate + H2O = a ribonucleoside 5'-diphosphate + phosphate + H(+). It carries out the reaction ATP + H2O = ADP + phosphate + H(+). Functionally, probable principal replicase for the negative-strand DNA, which replicates the 40S (+) genomic RNA into (-) antigenomic RNA. It cannot replicate the (-) into (+) until cleaved into p150 and p90 mature proteins. In terms of biological role, protease that cleaves the precursor polyprotein into two mature products. Together with RNA-directed RNA polymerase p90, replicates the 40S genomic and antigenomic RNA by recognizing replications specific signals. The heterodimer P150/p90 is probably the principal replicase for positive-strand genomic RNA and the 24S subgenomic RNA, which codes for structural proteins. Responsible for the mRNA-capping of the viral mRNAs. This function is necessary since all viral RNAs are synthesized in the cytoplasm, and host capping enzymes are restricted to the nucleus. Forms fibers late in the infection that may be involved in cell-to-cell spread of the virus RNA in the absence of virus particle formation. Its function is as follows. Together with protease/methyltransferase p150, replicates the 40S genomic and antigenomic RNA by recognizing replications specific signals. The heterodimer P150/p90 is probably the principal replicase for positive-strand genomic RNA and the 24S subgenomic RNA, which codes for structural proteins. A helicase activity is probably also present. This Rubella virus (strain Therien) (RUBV) protein is Non-structural polyprotein p200.